The chain runs to 260 residues: 3'-5' ssDNA/RNA exonuclease TatD (260 aa).

Positions 92, 128, and 153 each coordinate a divalent metal cation.

This sequence belongs to the metallo-dependent hydrolases superfamily. TatD-type hydrolase family. TatD subfamily. Monomer. Mg(2+) serves as cofactor.

The protein resides in the cytoplasm. Its function is as follows. 3'-5' exonuclease that prefers single-stranded DNA and RNA. May play a role in the H(2)O(2)-induced DNA damage repair. This Pectobacterium atrosepticum (strain SCRI 1043 / ATCC BAA-672) (Erwinia carotovora subsp. atroseptica) protein is 3'-5' ssDNA/RNA exonuclease TatD.